The primary structure comprises 647 residues: DNA mismatch repair protein MutL (647 aa).

A disordered region spans residues 389 to 423 (SESSVSSVANKQQPTVKQAKRSADDSDSEHGKLDY). The segment covering 409 to 423 (RSADDSDSEHGKLDY) has biased composition (basic and acidic residues).

It belongs to the DNA mismatch repair MutL/HexB family.

Its function is as follows. This protein is involved in the repair of mismatches in DNA. It is required for dam-dependent methyl-directed DNA mismatch repair. May act as a 'molecular matchmaker', a protein that promotes the formation of a stable complex between two or more DNA-binding proteins in an ATP-dependent manner without itself being part of a final effector complex. The sequence is that of DNA mismatch repair protein MutL from Streptococcus thermophilus (strain ATCC BAA-491 / LMD-9).